A 666-amino-acid polypeptide reads, in one-letter code: Probable potassium transport system protein Kup (666 aa).

A run of 12 helical transmembrane segments spans residues 16–36 (GFIIALGIVYGDIGTSPLYTM), 58–78 (ISLIIWTLTLITTIKYVLIAL), 100–120 (PWLIVPAMIGGATLLSDGALT), 149–169 (IITTLVILIVLFGIQRFGTGF), 173–193 (IFGPVMFIWFSFLGVSGFFNM), 221–241 (IFILGSIFLATTGAEALYSDL), 253–273 (WPFVKMCIVLSYCGQAAWILA), 294–314 (VYLVSLATLAAIIASQALISG), 343–363 (LYIPVINWILFAVTSCTVLAF), 373–393 (YGLAITITMLMTTILLKYYLI), 399–419 (PILAHLVMAFFALVEFIFFLA), and 424–444 (FMHGGYAVVILALAIVFVMFI).

This sequence belongs to the HAK/KUP transporter (TC 2.A.72) family.

Its subcellular location is the cell membrane. The catalysed reaction is K(+)(in) + H(+)(in) = K(+)(out) + H(+)(out). Functionally, transport of potassium into the cell. Likely operates as a K(+):H(+) symporter. The protein is Probable potassium transport system protein Kup of Streptococcus pyogenes serotype M3 (strain ATCC BAA-595 / MGAS315).